The primary structure comprises 946 residues: DNA primase (946 aa).

A disordered region spans residues 596–626 (RDTEEDEDGKEDKNNVPGNGVFQKTTSSVDT). A compositionally biased stretch (polar residues) spans 617–626 (FQKTTSSVDT). A CHC2-type zinc finger spans residues 881–920 (CLNYTHRNPQETVQVFIDLRTEHSYALWASLWSRCFTKKC).

The protein belongs to the herpesviridae DNA primase family. Associates with the helicase and the primase-associated factor to form the helicase-primase factor.

Its subcellular location is the host nucleus. Its function is as follows. Essential component of the helicase/primase complex. Unwinds the DNA at the replication forks and generates single-stranded DNA for both leading and lagging strand synthesis. The primase initiates primer synthesis and thereby produces large amount of short RNA primers on the lagging strand that the polymerase elongates using dNTPs. In Human cytomegalovirus (strain Merlin) (HHV-5), this protein is DNA primase (UL70).